The primary structure comprises 337 residues: S-adenosylmethionine:tRNA ribosyltransferase-isomerase (337 aa).

This sequence belongs to the QueA family. As to quaternary structure, monomer.

The protein resides in the cytoplasm. The enzyme catalyses 7-aminomethyl-7-carbaguanosine(34) in tRNA + S-adenosyl-L-methionine = epoxyqueuosine(34) in tRNA + adenine + L-methionine + 2 H(+). It participates in tRNA modification; tRNA-queuosine biosynthesis. Its function is as follows. Transfers and isomerizes the ribose moiety from AdoMet to the 7-aminomethyl group of 7-deazaguanine (preQ1-tRNA) to give epoxyqueuosine (oQ-tRNA). This chain is S-adenosylmethionine:tRNA ribosyltransferase-isomerase, found in Legionella pneumophila (strain Lens).